The chain runs to 184 residues: Fungal defensin copsin (184 aa).

A signal peptide spans M1–S23. Residues A24–R127 constitute a propeptide that is removed on maturation. The residue at position 128 (Q128) is a Pyrrolidone carboxylic acid. Disulfide bonds link C130/C159, C137/C167, C145/C175, C149/C177, C152/C184, and C162/C181.

Belongs to the invertebrate defensin family. In terms of processing, contains a unique connectivity of 6 cysteine bonds in contrast to most other CS-alpha-beta defensins which are linked by 3 or 4 disulfide bonds. Post-translationally, disulfide bonds are essential for structural integrity and antibacterial activity, since activity is lost after treatment with reducing agents. Thanks to disulfide bonds and N-terminal pyroglutamate, the protein is extremely stable in a wide pH and temperature range and insensitive toward proteases.

The protein localises to the secreted. The protein resides in the target cell membrane. Functionally, antimicrobial peptide that acts against Gram-positive bacteria (Listeria spp., Enterococcus spp., B.subtilis, B.anthracis, P.aeruginosa). Is not active against Gram-negative bacteria. It selectively inhibits peptidoglycan biosynthesis through complex formation with the cell wall precursor lipid II (1:1 molar ratio), probably anchoring lipid II to the membrane, thus inhibiting cell wall synthesis. The interaction with lipid II involves the third position of the pentapeptide. Shows bactericidal activity at about 2-fold minimal inhibitory concentrations (MIC), but does not form pore across the membrane. The chain is Fungal defensin copsin from Coprinopsis cinerea (Inky cap fungus).